The sequence spans 486 residues: Probable glycine dehydrogenase (decarboxylating) subunit 2 (486 aa).

Lys-273 is subject to N6-(pyridoxal phosphate)lysine.

It belongs to the GcvP family. C-terminal subunit subfamily. As to quaternary structure, the glycine cleavage system is composed of four proteins: P, T, L and H. In this organism, the P 'protein' is a heterodimer of two subunits. Requires pyridoxal 5'-phosphate as cofactor.

The enzyme catalyses N(6)-[(R)-lipoyl]-L-lysyl-[glycine-cleavage complex H protein] + glycine + H(+) = N(6)-[(R)-S(8)-aminomethyldihydrolipoyl]-L-lysyl-[glycine-cleavage complex H protein] + CO2. In terms of biological role, the glycine cleavage system catalyzes the degradation of glycine. The P protein binds the alpha-amino group of glycine through its pyridoxal phosphate cofactor; CO(2) is released and the remaining methylamine moiety is then transferred to the lipoamide cofactor of the H protein. This Alkaliphilus oremlandii (strain OhILAs) (Clostridium oremlandii (strain OhILAs)) protein is Probable glycine dehydrogenase (decarboxylating) subunit 2.